Consider the following 272-residue polypeptide: Large ribosomal subunit protein uL2cz/uL2cy (272 aa).

Disordered stretches follow at residues 1–33 (MAIH…SGQR) and 220–272 (VMNP…RRSK). An N-methylalanine modification is found at A2. A compositionally biased stretch (polar residues) spans 7–30 (KTSTSSTRNGAVQVKSNPRNNLIS).

This sequence belongs to the universal ribosomal protein uL2 family. Component of the chloroplast large ribosomal subunit (LSU). Mature 70S chloroplast ribosomes of higher plants consist of a small (30S) and a large (50S) subunit. The 30S small subunit contains 1 molecule of ribosomal RNA (16S rRNA) and 24 different proteins. The 50S large subunit contains 3 rRNA molecules (23S, 5S and 4.5S rRNA) and 33 different proteins.

It is found in the plastid. Its subcellular location is the chloroplast. Functionally, component of the chloroplast ribosome (chloro-ribosome), a dedicated translation machinery responsible for the synthesis of chloroplast genome-encoded proteins, including proteins of the transcription and translation machinery and components of the photosynthetic apparatus. The protein is Large ribosomal subunit protein uL2cz/uL2cy (rpl2-A) of Spinacia oleracea (Spinach).